The sequence spans 573 residues: DNA ligase (573 aa).

Glutamate 250 contributes to the ATP binding site. Lysine 252 (N6-AMP-lysine intermediate) is an active-site residue. ATP-binding residues include arginine 257, arginine 272, glutamate 301, phenylalanine 342, arginine 432, and lysine 438.

It belongs to the ATP-dependent DNA ligase family. Mg(2+) serves as cofactor.

It carries out the reaction ATP + (deoxyribonucleotide)n-3'-hydroxyl + 5'-phospho-(deoxyribonucleotide)m = (deoxyribonucleotide)n+m + AMP + diphosphate.. DNA ligase that seals nicks in double-stranded DNA during DNA replication, DNA recombination and DNA repair. The sequence is that of DNA ligase from Methanococcus maripaludis (strain DSM 14266 / JCM 13030 / NBRC 101832 / S2 / LL).